Here is a 254-residue protein sequence, read N- to C-terminus: Persulfide dioxygenase ETHE1, mitochondrial (254 aa).

A mitochondrion-targeting transit peptide spans 1–7 (MASAVVR). Phosphoserine is present on residues S14, S17, and S19. K32 is modified (N6-acetyllysine; alternate). Position 32 is an N6-succinyllysine; alternate (K32). Residue K66 is modified to N6-acetyllysine. Residues H79, H135, and D154 each contribute to the Fe cation site. Residue K172 is modified to N6-acetyllysine; alternate. Residue K172 is modified to N6-succinyllysine; alternate.

The protein belongs to the metallo-beta-lactamase superfamily. Glyoxalase II family. Homodimer. Monomer. Interacts with TST. May interact with RELA. The cofactor is Fe(2+).

Its subcellular location is the cytoplasm. It is found in the nucleus. The protein localises to the mitochondrion matrix. It catalyses the reaction S-sulfanylglutathione + O2 + H2O = sulfite + glutathione + 2 H(+). First described as a protein that can shuttle between the nucleus and the cytoplasm and suppress p53-induced apoptosis by sequestering the transcription factor RELA/NFKB3 in the cytoplasm and preventing its accumulation in the nucleus. Sulfur dioxygenase that plays an essential role in hydrogen sulfide catabolism in the mitochondrial matrix. Hydrogen sulfide (H(2)S) is first oxidized by SQRDL, giving rise to cysteine persulfide residues. ETHE1 consumes molecular oxygen to catalyze the oxidation of the persulfide, once it has been transferred to a thiophilic acceptor, such as glutathione (R-SSH). Plays an important role in metabolic homeostasis in mitochondria by metabolizing hydrogen sulfide and preventing the accumulation of supraphysiological H(2)S levels that have toxic effects, due to the inhibition of cytochrome c oxidase. This Mus musculus (Mouse) protein is Persulfide dioxygenase ETHE1, mitochondrial (Ethe1).